Consider the following 34-residue polypeptide: Photosystem II reaction center protein M (34 aa).

The helical transmembrane segment at 5–25 threads the bilayer; sequence ILAFSATALLILFPTALLLIL.

Belongs to the PsbM family. As to quaternary structure, PSII is composed of 1 copy each of membrane proteins PsbA, PsbB, PsbC, PsbD, PsbE, PsbF, PsbH, PsbI, PsbJ, PsbK, PsbL, PsbM, PsbT, PsbX, PsbY, PsbZ, Psb30/Ycf12, at least 3 peripheral proteins of the oxygen-evolving complex and a large number of cofactors. It forms dimeric complexes.

It is found in the plastid membrane. Functionally, one of the components of the core complex of photosystem II (PSII). PSII is a light-driven water:plastoquinone oxidoreductase that uses light energy to abstract electrons from H(2)O, generating O(2) and a proton gradient subsequently used for ATP formation. It consists of a core antenna complex that captures photons, and an electron transfer chain that converts photonic excitation into a charge separation. This subunit is found at the monomer-monomer interface. The sequence is that of Photosystem II reaction center protein M from Cuscuta gronovii (Common dodder).